A 312-amino-acid polypeptide reads, in one-letter code: Probable carboxylesterase 7 (312 aa).

At methionine 1 the chain carries N-acetylmethionine. The Involved in the stabilization of the negatively charged intermediate by the formation of the oxyanion hole motif lies at 75-77 (HGG). Residues serine 159, aspartate 255, and histidine 287 contribute to the active site.

Belongs to the 'GDXG' lipolytic enzyme family. In terms of tissue distribution, expressed in leaves, stems, flowers and siliques.

The catalysed reaction is a carboxylic ester + H2O = an alcohol + a carboxylate + H(+). In terms of biological role, carboxylesterase acting on esters with varying acyl chain length. The protein is Probable carboxylesterase 7 (CXE7) of Arabidopsis thaliana (Mouse-ear cress).